The sequence spans 132 residues: MVKNQAQKKGVKRKQVKNIPSGIVHVKATFNNTIVTITDPAGNVISWASAGKVGYSGSRKSSAFAATVAAQDAAKAAMSSGLKEVEVGLKGTGAGRESAVRALISSGLIVSVIRDETPVPHNGCRPRKRRRV.

The protein belongs to the universal ribosomal protein uS11 family. Part of the 30S ribosomal subunit. Interacts with proteins S7 and S18. Binds to IF-3.

In terms of biological role, located on the platform of the 30S subunit, it bridges several disparate RNA helices of the 16S rRNA. Forms part of the Shine-Dalgarno cleft in the 70S ribosome. In Chlamydia trachomatis serovar A (strain ATCC VR-571B / DSM 19440 / HAR-13), this protein is Small ribosomal subunit protein uS11.